The primary structure comprises 73 residues: Metallothionein-like protein type 2 (73 aa).

It belongs to the metallothionein superfamily. Type 15 family.

In terms of biological role, metallothioneins have a high content of cysteine residues that bind various heavy metals. The protein is Metallothionein-like protein type 2 of Solanum lycopersicum (Tomato).